We begin with the raw amino-acid sequence, 428 residues long: Cyclic AMP-responsive element-binding protein 3-like protein 3-A (428 aa).

Residues 1–286 (MENYSDQGGD…VMNGSNKPVQ (286 aa)) are Cytoplasmic-facing. Residues 67-83 (VSGSPVWSPSPSDSGIS) show a composition bias toward low complexity. Residues 67–104 (VSGSPVWSPSPSDSGISEDPHSDHIDSPPPNASPPMEP) are disordered. A compositionally biased stretch (pro residues) spans 93-103 (SPPPNASPPME). Residues 210–273 (ILKKIRRKIR…ISLMEQLRRL (64 aa)) enclose the bZIP domain. The interval 212–241 (KKIRRKIRNKQSAQESRKKKKEYIDGLESR) is basic motif. Positions 252–273 (LQRKVFQLEKCNISLMEQLRRL) are leucine-zipper. The helical; Signal-anchor for type II membrane protein transmembrane segment at 287–303 (AGTCVLVLLLSFTLILL) threads the bilayer. The Lumenal segment spans residues 304 to 428 (PNLKPFTDTK…SRRSPHADDM (125 aa)). Positions 381-428 (TEYDPESHNHSFDQHDEHHHGDPITGHVATVTLNPRRGSRRSPHADDM) are disordered. Residues 385 to 402 (PESHNHSFDQHDEHHHGD) are compositionally biased toward basic and acidic residues. N-linked (GlcNAc...) asparagine glycosylation is present at asparagine 389.

It belongs to the bZIP family. ATF subfamily. In terms of assembly, binds DNA as a dimer. Post-translationally, controlled by regulated intramembrane proteolysis (RIP). A fragment containing the cytoplasmic transcription factor domain is released by proteolysis. The cleavage seems to be performed sequentially by site-1 and site-2 proteases.

The protein localises to the endoplasmic reticulum membrane. It localises to the nucleus. Functionally, transcriptional activator. Binds the cAMP response element (CRE). Activates transcription through box-B element and CRE. Seems to function synergistically with atf6. Regulates FGF21 transcription. This chain is Cyclic AMP-responsive element-binding protein 3-like protein 3-A (creb3l3a), found in Danio rerio (Zebrafish).